The chain runs to 209 residues: A-type ATP synthase subunit D (209 aa).

This sequence belongs to the V-ATPase D subunit family. Has multiple subunits with at least A(3), B(3), C, D, E, F, H, I and proteolipid K(x).

Its subcellular location is the cell membrane. Its function is as follows. Component of the A-type ATP synthase that produces ATP from ADP in the presence of a proton gradient across the membrane. The polypeptide is A-type ATP synthase subunit D (Archaeoglobus fulgidus (strain ATCC 49558 / DSM 4304 / JCM 9628 / NBRC 100126 / VC-16)).